A 777-amino-acid polypeptide reads, in one-letter code: Myotubularin-related protein 10 (777 aa).

A disordered region spans residues 196–217 (PSGDGGGGGGGGNGAGGGSSQK). Residues 197 to 214 (SGDGGGGGGGGNGAGGGS) are compositionally biased toward gly residues. Residues 221 to 661 (FETYSDWDRE…THIKLWKLCY (441 aa)) enclose the Myotubularin phosphatase domain. A phosphoserine mark is found at Ser607 and Ser751.

The protein belongs to the protein-tyrosine phosphatase family. Non-receptor class myotubularin subfamily.

This is Myotubularin-related protein 10 (MTMR10) from Homo sapiens (Human).